A 374-amino-acid chain; its full sequence is Alanine racemase (374 aa).

The Proton acceptor; specific for D-alanine role is filled by Lys-35. Lys-35 bears the N6-(pyridoxal phosphate)lysine mark. Arg-133 is a substrate binding site. Tyr-264 (proton acceptor; specific for L-alanine) is an active-site residue. Met-312 is a substrate binding site.

It belongs to the alanine racemase family. It depends on pyridoxal 5'-phosphate as a cofactor.

It catalyses the reaction L-alanine = D-alanine. Its pathway is amino-acid biosynthesis; D-alanine biosynthesis; D-alanine from L-alanine: step 1/1. Catalyzes the interconversion of L-alanine and D-alanine. May also act on other amino acids. This chain is Alanine racemase (alr), found in Thermobifida fusca (strain YX).